Here is a 192-residue protein sequence, read N- to C-terminus: VQ motif-containing protein 22 (192 aa).

Positions 24–38 are enriched in low complexity; the sequence is ASTAVTTTTAGDTTS. The tract at residues 24-65 is disordered; sequence ASTAVTTTTAGDTTSIDSRLSPETGRVTKPTRRRSRASRRTP. Basic residues predominate over residues 52 to 62; that stretch reads KPTRRRSRASR. The short motif at 76 to 85 is the VQ element; sequence FRAMVQQYTG. 2 disordered regions span residues 101–135 and 163–192; these read FSLT…PQRP and FGTV…SRLQ. Composition is skewed to low complexity over residues 102–114 and 175–192; these read SLTS…AGSS and APSS…SRLQ.

Its subcellular location is the nucleus. Its function is as follows. May function as positive regulator of plant growth. In Arabidopsis thaliana (Mouse-ear cress), this protein is VQ motif-containing protein 22.